The following is a 301-amino-acid chain: tRNA-cytidine(32) 2-sulfurtransferase (301 aa).

Residues 55–60 (SGGKDS) carry the PP-loop motif motif. 3 residues coordinate [4Fe-4S] cluster: Cys-130, Cys-133, and Cys-221.

It belongs to the TtcA family. In terms of assembly, homodimer. It depends on Mg(2+) as a cofactor. [4Fe-4S] cluster serves as cofactor.

Its subcellular location is the cytoplasm. The enzyme catalyses cytidine(32) in tRNA + S-sulfanyl-L-cysteinyl-[cysteine desulfurase] + AH2 + ATP = 2-thiocytidine(32) in tRNA + L-cysteinyl-[cysteine desulfurase] + A + AMP + diphosphate + H(+). The protein operates within tRNA modification. Functionally, catalyzes the ATP-dependent 2-thiolation of cytidine in position 32 of tRNA, to form 2-thiocytidine (s(2)C32). The sulfur atoms are provided by the cysteine/cysteine desulfurase (IscS) system. This is tRNA-cytidine(32) 2-sulfurtransferase from Acinetobacter baumannii (strain SDF).